The chain runs to 350 residues: tRNA pseudouridine synthase D (350 aa).

Catalysis depends on aspartate 85, which acts as the Nucleophile. The region spanning 160–310 (GVINYFGEQR…EAARRTILLR (151 aa)) is the TRUD domain.

The protein belongs to the pseudouridine synthase TruD family.

The catalysed reaction is uridine(13) in tRNA = pseudouridine(13) in tRNA. Responsible for synthesis of pseudouridine from uracil-13 in transfer RNAs. In Idiomarina loihiensis (strain ATCC BAA-735 / DSM 15497 / L2-TR), this protein is tRNA pseudouridine synthase D.